Consider the following 154-residue polypeptide: 6,7-dimethyl-8-ribityllumazine synthase (154 aa).

Residues F22, 56–58, and 80–82 contribute to the 5-amino-6-(D-ribitylamino)uracil site; these read AFE and TVI. 85–86 provides a ligand contact to (2S)-2-hydroxy-3-oxobutyl phosphate; that stretch reads AT. The active-site Proton donor is the H88. F113 provides a ligand contact to 5-amino-6-(D-ribitylamino)uracil. R127 contributes to the (2S)-2-hydroxy-3-oxobutyl phosphate binding site.

The protein belongs to the DMRL synthase family. As to quaternary structure, forms an icosahedral capsid composed of 60 subunits, arranged as a dodecamer of pentamers.

The enzyme catalyses (2S)-2-hydroxy-3-oxobutyl phosphate + 5-amino-6-(D-ribitylamino)uracil = 6,7-dimethyl-8-(1-D-ribityl)lumazine + phosphate + 2 H2O + H(+). It functions in the pathway cofactor biosynthesis; riboflavin biosynthesis; riboflavin from 2-hydroxy-3-oxobutyl phosphate and 5-amino-6-(D-ribitylamino)uracil: step 1/2. Catalyzes the formation of 6,7-dimethyl-8-ribityllumazine by condensation of 5-amino-6-(D-ribitylamino)uracil with 3,4-dihydroxy-2-butanone 4-phosphate. This is the penultimate step in the biosynthesis of riboflavin. This is 6,7-dimethyl-8-ribityllumazine synthase from Bacillus licheniformis (strain ATCC 14580 / DSM 13 / JCM 2505 / CCUG 7422 / NBRC 12200 / NCIMB 9375 / NCTC 10341 / NRRL NRS-1264 / Gibson 46).